A 918-amino-acid chain; its full sequence is Signal transduction histidine-protein kinase BarA (918 aa).

Residues 1 to 9 (MTNYSLRAR) are Cytoplasmic-facing. A helical membrane pass occupies residues 10 to 31 (MMILILAPTVLIGLLLSIFFVV). The Periplasmic segment spans residues 32-176 (HRYNDLQRQL…KSVRLQQYKE (145 aa)). A helical transmembrane segment spans residues 177–196 (IFISSVMMLFCIGIALIFGW). Residues 197–918 (RLMRDVTGPI…VAREASKILG (722 aa)) are Cytoplasmic-facing. An HAMP domain is found at 200–252 (RDVTGPIRNMVNTVDRIRRGQLDSRVEGFMLGELDMLKNGINSMAMSLAAYHE). One can recognise a Histidine kinase domain in the interval 299-520 (NMSHELRTPL…TFWFHINLDL (222 aa)). His302 bears the Phosphohistidine; by autocatalysis mark. Positions 669 to 785 (TVMAVDDNPA…RLHNLLLRYK (117 aa)) constitute a Response regulatory domain. Asp718 carries the 4-aspartylphosphate modification. The HPt domain maps to 822–918 (KTDLARDMLQ…VAREASKILG (97 aa)). His861 carries the post-translational modification Phosphohistidine.

In terms of processing, activation requires a sequential transfer of a phosphate group from a His in the primary transmitter domain, to an Asp in the receiver domain and to a His in the secondary transmitter domain.

It localises to the cell inner membrane. The enzyme catalyses ATP + protein L-histidine = ADP + protein N-phospho-L-histidine.. Functionally, member of the two-component regulatory system UvrY/BarA involved in the regulation of carbon metabolism via the CsrA/CsrB regulatory system. Phosphorylates UvrY, probably via a four-step phosphorelay. The polypeptide is Signal transduction histidine-protein kinase BarA (barA) (Escherichia coli O157:H7).